The sequence spans 310 residues: 4-diphosphocytidyl-2-C-methyl-D-erythritol kinase (310 aa).

Lys-11 is a catalytic residue. 95-105 (PIGAGLAGGSA) is a binding site for ATP. Asp-137 is an active-site residue.

Belongs to the GHMP kinase family. IspE subfamily.

It catalyses the reaction 4-CDP-2-C-methyl-D-erythritol + ATP = 4-CDP-2-C-methyl-D-erythritol 2-phosphate + ADP + H(+). It functions in the pathway isoprenoid biosynthesis; isopentenyl diphosphate biosynthesis via DXP pathway; isopentenyl diphosphate from 1-deoxy-D-xylulose 5-phosphate: step 3/6. Functionally, catalyzes the phosphorylation of the position 2 hydroxy group of 4-diphosphocytidyl-2C-methyl-D-erythritol. The polypeptide is 4-diphosphocytidyl-2-C-methyl-D-erythritol kinase (Acaryochloris marina (strain MBIC 11017)).